The chain runs to 57 residues: Ribosome modulation factor 1 (57 aa).

Residues 1–14 (MKRQKRDRQSRAHT) are compositionally biased toward basic residues. The tract at residues 1 to 24 (MKRQKRDRQSRAHTRGYQAGISGR) is disordered.

The protein belongs to the ribosome modulation factor family.

The protein localises to the cytoplasm. Its function is as follows. During stationary phase, converts 70S ribosomes to an inactive dimeric form (100S ribosomes). The polypeptide is Ribosome modulation factor 1 (Colwellia psychrerythraea (strain 34H / ATCC BAA-681) (Vibrio psychroerythus)).